Reading from the N-terminus, the 345-residue chain is Protein RecA (345 aa).

Residue 65 to 72 (GPESSGKT) coordinates ATP.

The protein belongs to the RecA family.

It localises to the cytoplasm. In terms of biological role, can catalyze the hydrolysis of ATP in the presence of single-stranded DNA, the ATP-dependent uptake of single-stranded DNA by duplex DNA, and the ATP-dependent hybridization of homologous single-stranded DNAs. It interacts with LexA causing its activation and leading to its autocatalytic cleavage. This is Protein RecA from Stenotrophomonas maltophilia (strain R551-3).